The sequence spans 280 residues: Polyamine aminopropyltransferase 2 (280 aa).

The 236-residue stretch at 2-237 folds into the PABS domain; sequence ELWLDEALEL…GIIGFTYCSK (236 aa). Glutamine 33 lines the S-methyl-5'-thioadenosine pocket. Positions 64 and 88 each coordinate spermidine. Residues glutamate 108 and 139 to 140 contribute to the S-methyl-5'-thioadenosine site; that span reads DG. Catalysis depends on aspartate 157, which acts as the Proton acceptor. 157–160 contacts spermidine; sequence DSSD. Residue proline 164 coordinates S-methyl-5'-thioadenosine.

The protein belongs to the spermidine/spermine synthase family. As to quaternary structure, homodimer or homotetramer.

The protein resides in the cytoplasm. The catalysed reaction is S-adenosyl 3-(methylsulfanyl)propylamine + putrescine = S-methyl-5'-thioadenosine + spermidine + H(+). The protein operates within amine and polyamine biosynthesis; spermidine biosynthesis; spermidine from putrescine: step 1/1. Functionally, catalyzes the irreversible transfer of a propylamine group from the amino donor S-adenosylmethioninamine (decarboxy-AdoMet) to putrescine (1,4-diaminobutane) to yield spermidine. In Leptospira interrogans serogroup Icterohaemorrhagiae serovar Lai (strain 56601), this protein is Polyamine aminopropyltransferase 2.